The sequence spans 383 residues: Gamma-butyrobetaine dioxygenase (383 aa).

Residues Cys-46, Cys-48, Cys-51, and His-91 each contribute to the Zn(2+) site. Residues His-209, Asp-211, and His-350 each contribute to the Fe cation site.

This sequence belongs to the gamma-BBH/TMLD family. Homodimer. Requires Fe(2+) as cofactor. The cofactor is L-ascorbate.

The protein resides in the cytoplasm. The enzyme catalyses 4-(trimethylamino)butanoate + 2-oxoglutarate + O2 = carnitine + succinate + CO2. Its pathway is amine and polyamine biosynthesis; carnitine biosynthesis. Functionally, catalyzes the formation of L-carnitine from gamma-butyrobetaine. This Pseudomonas sp. (strain AK-1) protein is Gamma-butyrobetaine dioxygenase.